The primary structure comprises 616 residues: Chaperone protein HscA homolog (616 aa).

The protein belongs to the heat shock protein 70 family.

Functionally, chaperone involved in the maturation of iron-sulfur cluster-containing proteins. Has a low intrinsic ATPase activity which is markedly stimulated by HscB. In Tolumonas auensis (strain DSM 9187 / NBRC 110442 / TA 4), this protein is Chaperone protein HscA homolog.